A 282-amino-acid polypeptide reads, in one-letter code: NADPH-dependent 7-cyano-7-deazaguanine reductase (282 aa).

Position 88–90 (88–90 (IES)) interacts with substrate. Position 90–91 (90–91 (SK)) interacts with NADPH. The active-site Thioimide intermediate is the Cys-190. Asp-197 (proton donor) is an active-site residue. 229-230 (HE) provides a ligand contact to substrate. Residue 258-259 (RG) participates in NADPH binding.

It belongs to the GTP cyclohydrolase I family. QueF type 2 subfamily. In terms of assembly, homodimer.

Its subcellular location is the cytoplasm. The enzyme catalyses 7-aminomethyl-7-carbaguanine + 2 NADP(+) = 7-cyano-7-deazaguanine + 2 NADPH + 3 H(+). It participates in tRNA modification; tRNA-queuosine biosynthesis. In terms of biological role, catalyzes the NADPH-dependent reduction of 7-cyano-7-deazaguanine (preQ0) to 7-aminomethyl-7-deazaguanine (preQ1). This is NADPH-dependent 7-cyano-7-deazaguanine reductase from Salmonella arizonae (strain ATCC BAA-731 / CDC346-86 / RSK2980).